Here is a 114-residue protein sequence, read N- to C-terminus: Iron-sulfur cluster insertion protein ErpA (114 aa).

3 residues coordinate iron-sulfur cluster: cysteine 42, cysteine 106, and cysteine 108.

This sequence belongs to the HesB/IscA family. In terms of assembly, homodimer. Iron-sulfur cluster is required as a cofactor.

In terms of biological role, required for insertion of 4Fe-4S clusters for at least IspG. The sequence is that of Iron-sulfur cluster insertion protein ErpA from Serratia proteamaculans (strain 568).